Consider the following 360-residue polypeptide: UDP-N-acetylglucosamine--N-acetylmuramyl-(pentapeptide) pyrophosphoryl-undecaprenol N-acetylglucosamine transferase (360 aa).

Residues 15-17 (TGG), Asn-127, Arg-163, Ser-191, Ile-249, 268-273 (ALTVSE), and Gln-293 contribute to the UDP-N-acetyl-alpha-D-glucosamine site.

This sequence belongs to the glycosyltransferase 28 family. MurG subfamily.

Its subcellular location is the cell inner membrane. The enzyme catalyses di-trans,octa-cis-undecaprenyl diphospho-N-acetyl-alpha-D-muramoyl-L-alanyl-D-glutamyl-meso-2,6-diaminopimeloyl-D-alanyl-D-alanine + UDP-N-acetyl-alpha-D-glucosamine = di-trans,octa-cis-undecaprenyl diphospho-[N-acetyl-alpha-D-glucosaminyl-(1-&gt;4)]-N-acetyl-alpha-D-muramoyl-L-alanyl-D-glutamyl-meso-2,6-diaminopimeloyl-D-alanyl-D-alanine + UDP + H(+). It functions in the pathway cell wall biogenesis; peptidoglycan biosynthesis. Its function is as follows. Cell wall formation. Catalyzes the transfer of a GlcNAc subunit on undecaprenyl-pyrophosphoryl-MurNAc-pentapeptide (lipid intermediate I) to form undecaprenyl-pyrophosphoryl-MurNAc-(pentapeptide)GlcNAc (lipid intermediate II). The sequence is that of UDP-N-acetylglucosamine--N-acetylmuramyl-(pentapeptide) pyrophosphoryl-undecaprenol N-acetylglucosamine transferase from Proteus mirabilis (strain HI4320).